A 250-amino-acid chain; its full sequence is DNA repair protein RecO (250 aa).

Belongs to the RecO family.

Its function is as follows. Involved in DNA repair and RecF pathway recombination. The sequence is that of DNA repair protein RecO from Staphylococcus aureus (strain bovine RF122 / ET3-1).